A 274-amino-acid chain; its full sequence is Carboxy-S-adenosyl-L-methionine synthase (274 aa).

Residues Tyr-59, 93–95 (GCS), 149–150 (DI), Asn-164, and Arg-231 each bind S-adenosyl-L-methionine.

This sequence belongs to the class I-like SAM-binding methyltransferase superfamily. Cx-SAM synthase family. In terms of assembly, homodimer.

It catalyses the reaction prephenate + S-adenosyl-L-methionine = carboxy-S-adenosyl-L-methionine + 3-phenylpyruvate + H2O. In terms of biological role, catalyzes the conversion of S-adenosyl-L-methionine (SAM) to carboxy-S-adenosyl-L-methionine (Cx-SAM). This is Carboxy-S-adenosyl-L-methionine synthase from Psychrobacter sp. (strain PRwf-1).